Reading from the N-terminus, the 441-residue chain is Vacuolar cation/proton exchanger 5 (441 aa).

Glycine 2 carries the N-myristoyl glycine lipid modification. Over 2-69 (GCCKVPALIQ…PNNSVLQSFK (68 aa)) the chain is Cytoplasmic. S-palmitoyl cysteine attachment occurs at residues cysteine 3 and cysteine 4. A helical transmembrane segment spans residues 70 to 90 (IVILSNKLNLLLPFGPLAILL). At 91–97 (HYLTDNK) the chain is on the extracellular side. Residues 98–118 (GWIFLLSLVGITPLAERLGYA) traverse the membrane as a helical segment. Over 119-129 (TEQLACYTGST) the chain is Cytoplasmic. Residues 130–150 (VGGLLNATFGNVTELIISIFA) traverse the membrane as a helical segment. A cation selection region spans residues 139-174 (GNVTELIISIFALKSGMIRVVQLTLLGSILSNMLLV). Topologically, residues 151–165 (LKSGMIRVVQLTLLG) are extracellular. The helical transmembrane segment at 166 to 186 (SILSNMLLVLGCAFFCGGLVF) threads the bilayer. At 187–197 (SQKEQVFDKGN) the chain is on the cytoplasmic side. The chain crosses the membrane as a helical span at residues 198–218 (AVVNSGLLLMAVMGLLFPAVL). Topologically, residues 219–231 (HYTHSEVHAGSSE) are extracellular. Residues 232 to 252 (LALSRFSSCIMLVAYAAYLFF) form a helical membrane-spanning segment. Residues 253–286 (QLKSQPSSYTPLTEETNQNEETSDDDEDPEISKW) are Cytoplasmic-facing. Residues 287–307 (EAIIWLSILTAWVSLLSGYLV) form a helical membrane-spanning segment. Topologically, residues 308-311 (DAIE) are extracellular. The helical transmembrane segment at 312–332 (GASVSWKIPISFISVILLPIV) threads the bilayer. Topologically, residues 333-354 (GNAAEHAGAIMFAMKDKLDLSL) are cytoplasmic. The segment at 333-368 (GNAAEHAGAIMFAMKDKLDLSLGVAIGSSIQISMFA) is cation selection. A helical membrane pass occupies residues 355–375 (GVAIGSSIQISMFAVPFCVVI). Residues 376 to 384 (GWMMGAQMD) lie on the Extracellular side of the membrane. A helical transmembrane segment spans residues 385-405 (LNFQLFETATLFITVIVVAFF). The Cytoplasmic segment spans residues 406-412 (LQEGTSN). A helical transmembrane segment spans residues 413–433 (YFKGLMLILCYLIVAASFFVH). The Extracellular portion of the chain corresponds to 434–441 (EDPHQDDI).

It belongs to the Ca(2+):cation antiporter (CaCA) (TC 2.A.19) family. Cation/proton exchanger (CAX) subfamily.

The protein resides in the vacuole membrane. Vacuolar cation/proton exchanger (CAX). Translocates Ca(2+) and other metal ions into vacuoles using the proton gradient formed by H(+)-ATPase and H(+)-pyrophosphatase. The sequence is that of Vacuolar cation/proton exchanger 5 (CAX5) from Arabidopsis thaliana (Mouse-ear cress).